A 71-amino-acid polypeptide reads, in one-letter code: Venom peptide 2-long (71 aa).

The N-terminal stretch at Met-1–Ala-24 is a signal peptide. AXPX repeat units lie at residues Ala-24–Ala-27, Ala-32–Gly-35, Ala-44–Glu-47, Ala-50–Glu-53, and Ala-54–Ile-57. Residues Val-25 to Ala-54 constitute a propeptide that is removed on maturation. Residue Leu-68 is modified to Leucine amide.

Belongs to the MCD family. Protonectin subfamily. Expressed by the venom gland.

The protein resides in the secreted. It localises to the target cell membrane. Its function is as follows. Antimicrobial peptide with strong activity against the fungus B.cinerea (MIC=0.5 ug/ml), and poor activities against the fungus C.albicans (MIC=100 ug/ml), the Gram-positive bacterium S.aureus (MIC=125 ug/ml) and the Gram-negative bacterium E.coli (MIC=125 ug/ml). In terms of biological role, antimicrobial peptide with strong activity against the fungus B.cinerea (MIC=0.4 uM), and poor activities against the fungus C.albicans (MIC=16 uM), the Gram-positive bacterium S.aureus (MIC=20 uM) and the Gram-negative bacterium E.coli (MIC=79 uM). Shows cytolytic activity against insect cell lines. Has potent hemolytic activity against ovine erythrocytes. Has potent hemolytic activity against human erythrocytes (EC(50)=31 uM). In vivo, peptide injection in the vicinity of the head and thorax of lepidopteran larvae induces feeding disorder followed by death due to starvation. This chain is Venom peptide 2-long, found in Orancistrocerus drewseni (Solitary wasp).